Consider the following 901-residue polypeptide: Protein translocase subunit SecA (901 aa).

ATP-binding positions include glutamine 89, 107 to 111, and aspartate 502; that span reads GEGKT. Positions 838–883 are disordered; that stretch reads YQQQQAETEAQMHPEHEEAEGGEVSGRVAGFDETDPTTWGNPSRND. Zn(2+) is bound by residues cysteine 885, cysteine 887, cysteine 896, and histidine 897.

Belongs to the SecA family. In terms of assembly, monomer and homodimer. Part of the essential Sec protein translocation apparatus which comprises SecA, SecYEG and auxiliary proteins SecDF-YajC and YidC. It depends on Zn(2+) as a cofactor.

It is found in the cell inner membrane. Its subcellular location is the cytoplasm. It carries out the reaction ATP + H2O + cellular proteinSide 1 = ADP + phosphate + cellular proteinSide 2.. In terms of biological role, part of the Sec protein translocase complex. Interacts with the SecYEG preprotein conducting channel. Has a central role in coupling the hydrolysis of ATP to the transfer of proteins into and across the cell membrane, serving both as a receptor for the preprotein-SecB complex and as an ATP-driven molecular motor driving the stepwise translocation of polypeptide chains across the membrane. This Paracoccus denitrificans (strain Pd 1222) protein is Protein translocase subunit SecA.